The chain runs to 102 residues: Large ribosomal subunit protein bL21 (102 aa).

It belongs to the bacterial ribosomal protein bL21 family. Part of the 50S ribosomal subunit. Contacts protein L20.

This protein binds to 23S rRNA in the presence of protein L20. This chain is Large ribosomal subunit protein bL21, found in Zymomonas mobilis subsp. mobilis (strain ATCC 31821 / ZM4 / CP4).